The primary structure comprises 346 residues: Phosphoribosylformylglycinamidine cyclo-ligase (346 aa).

Belongs to the AIR synthase family.

It is found in the cytoplasm. It catalyses the reaction 2-formamido-N(1)-(5-O-phospho-beta-D-ribosyl)acetamidine + ATP = 5-amino-1-(5-phospho-beta-D-ribosyl)imidazole + ADP + phosphate + H(+). Its pathway is purine metabolism; IMP biosynthesis via de novo pathway; 5-amino-1-(5-phospho-D-ribosyl)imidazole from N(2)-formyl-N(1)-(5-phospho-D-ribosyl)glycinamide: step 2/2. In Colwellia psychrerythraea (strain 34H / ATCC BAA-681) (Vibrio psychroerythus), this protein is Phosphoribosylformylglycinamidine cyclo-ligase.